Here is a 221-residue protein sequence, read N- to C-terminus: MTDVADVNVGIIRFPGTNCDRDIEYAVNLVGANSHYIYWNETDLSQMDVVIIPGGFSYGDYLRAGSIAGITPIIDAIKDFAKKENPVLGICNGAQILGEIDLVPGVFIENENAKFICKSKKLKVNTTRTPFTKLYKKNEVIDLPIAHKEGRYYTDNLETLYDNNQIVLTFEDGNPNGSLDNITGVCNVDGNVVAVMPHPERAVEKLLRSEDGLKFFKSFLD.

The Glutamine amidotransferase type-1 domain maps to 8-221 (NVGIIRFPGT…GLKFFKSFLD (214 aa)). Cys91 serves as the catalytic Nucleophile. Residues His198 and Glu200 contribute to the active site.

Part of the FGAM synthase complex composed of 1 PurL, 1 PurQ and 2 PurS subunits.

It is found in the cytoplasm. It carries out the reaction N(2)-formyl-N(1)-(5-phospho-beta-D-ribosyl)glycinamide + L-glutamine + ATP + H2O = 2-formamido-N(1)-(5-O-phospho-beta-D-ribosyl)acetamidine + L-glutamate + ADP + phosphate + H(+). It catalyses the reaction L-glutamine + H2O = L-glutamate + NH4(+). Its pathway is purine metabolism; IMP biosynthesis via de novo pathway; 5-amino-1-(5-phospho-D-ribosyl)imidazole from N(2)-formyl-N(1)-(5-phospho-D-ribosyl)glycinamide: step 1/2. In terms of biological role, part of the phosphoribosylformylglycinamidine synthase complex involved in the purines biosynthetic pathway. Catalyzes the ATP-dependent conversion of formylglycinamide ribonucleotide (FGAR) and glutamine to yield formylglycinamidine ribonucleotide (FGAM) and glutamate. The FGAM synthase complex is composed of three subunits. PurQ produces an ammonia molecule by converting glutamine to glutamate. PurL transfers the ammonia molecule to FGAR to form FGAM in an ATP-dependent manner. PurS interacts with PurQ and PurL and is thought to assist in the transfer of the ammonia molecule from PurQ to PurL. This Methanosphaera stadtmanae (strain ATCC 43021 / DSM 3091 / JCM 11832 / MCB-3) protein is Phosphoribosylformylglycinamidine synthase subunit PurQ.